Consider the following 775-residue polypeptide: MMEDNKQLALRIDGAVQSASQEVTNLRAELTATNRRLAELSGGGGPGPGPGAAASASAAGDSAATNMENPQLGAQVLLREEVSRLQEEVHLLRQMKEMLAKDLEESQGGKSSEVLSATELRVQLAQKEQELARAKEALQAMKADRKRLKGEKTDLVSQMQQLYATLESREEQLRDFIRNYEQHRKESEDAVKALAKEKDLLEREKWELRRQAKEATDHATALRSQLDLKDNRMKELEAELAMAKQSLATLTKDVPKRHSLAMPGETVLNGNQEWVVQADLPLTAAIRQSQQTLYHSHPPHPADRQAVRVSPCHSRQPSVISDASAAEGDRSSTPSDINSPRHRTHSLCNGDSPGPVQKNLHNPIVQSLEDLEDQKRKKKKEKMGFGSISRVFARGKQRKSLDPGLFDDSDSQCSPTRQSLSLSEGEEQMDRLQQVELVRTTPMSHWKAGTVQAWLEVVMAMPMYVKACTENVKSGKVLLSLSDEDLQLGLGVCSSLHRRKLRLAIEDYRDAEAGRSLSKAAELDHHWVAKAWLNDIGLSQYSQAFQNHLVDGRMLNSLMKRDLEKHLNVSKKFHQVSILLGIELLYQVNFSREALQERRARCETQNIDPVVWTNQRVLKWVRDIDLKEYADNLTNSGVHGAVLVLEPTFNAEAMATALGIPSGKHILRRHLAEEMSAVFHPANSTGIREAERFGTPPGRASSVTRAGKEENSSGLKYKAGRLPLGKIGRGFSSKDPDFHDDYGSLQNEDCGDDDPQSRLEQCRLEGYNSLEVTNV.

The segment at 38-66 (AELSGGGGPGPGPGAAASASAAGDSAATN) is disordered. A compositionally biased stretch (low complexity) spans 51–64 (GAAASASAAGDSAA). Positions 74–256 (AQVLLREEVS…LATLTKDVPK (183 aa)) form a coiled coil. Positions 174-333 (RDFIRNYEQH…SAAEGDRSST (160 aa)) are interaction with PPL. Positions 290-427 (QQTLYHSHPP…QSLSLSEGEE (138 aa)) are disordered. Phosphoserine is present on residues S352, S367, and S387. Positions 411-422 (SQCSPTRQSLSL) are enriched in polar residues. SAM domains lie at 446–511 (WKAG…YRDA), 524–588 (DHHW…LYQV), and 612–679 (WTNQ…SAVF). Disordered stretches follow at residues 688 to 715 (REAE…SSGL) and 729 to 762 (RGFS…LEQC). The segment covering 732–742 (SSKDPDFHDDY) has biased composition (basic and acidic residues).

It belongs to the kazrin family. As to quaternary structure, isoform 2, isoform 3 and isoform 4 interact with PPL N-terminus. In terms of tissue distribution, isoform 2, isoform 3 and isoform 4 are expressed in several cell lines including keratinocytes and bladder and epidermoid carcinoma (at protein level). Isoform 2, isoform 3 and isoform 4 are expressed in hair follicle and interfollicular epidermis (at protein level).

It localises to the cytoplasm. The protein localises to the cytoskeleton. The protein resides in the cell junction. Its subcellular location is the desmosome. It is found in the nucleus. Functionally, component of the cornified envelope of keratinocytes. May be involved in the interplay between adherens junctions and desmosomes. The function in the nucleus is not known. In Homo sapiens (Human), this protein is Kazrin.